A 223-amino-acid chain; its full sequence is tRNA (guanine-N(7)-)-methyltransferase (223 aa).

S-adenosyl-L-methionine contacts are provided by aspartate 56, aspartate 81, aspartate 108, and aspartate 130. Aspartate 130 is a catalytic residue. Residues lysine 134 and aspartate 166 each contribute to the substrate site.

It belongs to the class I-like SAM-binding methyltransferase superfamily. TrmB family.

The catalysed reaction is guanosine(46) in tRNA + S-adenosyl-L-methionine = N(7)-methylguanosine(46) in tRNA + S-adenosyl-L-homocysteine. Its pathway is tRNA modification; N(7)-methylguanine-tRNA biosynthesis. In terms of biological role, catalyzes the formation of N(7)-methylguanine at position 46 (m7G46) in tRNA. This chain is tRNA (guanine-N(7)-)-methyltransferase, found in Rubrobacter xylanophilus (strain DSM 9941 / JCM 11954 / NBRC 16129 / PRD-1).